The primary structure comprises 237 residues: N-alpha-acetyltransferase 40 (237 aa).

The N-myristoyl glycine moiety is linked to residue Gly2. The region spanning 63-216 is the N-acetyltransferase domain; the sequence is SGLEPATVDW…EDCSYEILSR (154 aa). Substrate is bound by residues Tyr85, 127-129, and Tyr138; that span reads DVE. Acetyl-CoA-binding positions include 140-142 and 148-153; these read VQL and RKGLGK. Position 174 (Thr174) interacts with substrate. Acetyl-CoA is bound at residue Asn179. Substrate contacts are provided by Ser197 and Tyr211.

The protein belongs to the acetyltransferase family. NAA40 subfamily. As to expression, widely expressed; with the highest expression level in liver and the lowest expression in brain (at protein level).

Its subcellular location is the cytoplasm. The protein resides in the nucleus. It catalyses the reaction N-terminal L-seryl-[histone H4] + acetyl-CoA = N-terminal N(alpha)-acetyl-L-seryl-[histone H4] + CoA + H(+). The catalysed reaction is N-terminal L-seryl-[histone H2A] + acetyl-CoA = N-terminal N(alpha)-acetyl-L-seryl-[histone H2A] + CoA + H(+). Functionally, N-alpha-acetyltransferase that specifically mediates the acetylation of the N-terminal residues of histones H4 and H2A. In contrast to other N-alpha-acetyltransferase, has a very specific selectivity for histones H4 and H2A N-terminus and specifically recognizes the 'Ser-Gly-Arg-Gly sequence'. Acts as a negative regulator of apoptosis. May play a role in hepatic lipid metabolism. In Homo sapiens (Human), this protein is N-alpha-acetyltransferase 40.